The primary structure comprises 190 residues: Putative manganese efflux pump MntP (190 aa).

Transmembrane regions (helical) follow at residues 3-23 (MSAT…ASIG), 41-61 (LIFG…GFFA), 62-82 (SQYI…ILGG), 105-127 (LALL…VGLA), 143-163 (ATMI…PILG), and 168-188 (VMGG…HLGY).

The protein belongs to the MntP (TC 9.B.29) family.

The protein resides in the cell inner membrane. In terms of biological role, probably functions as a manganese efflux pump. The chain is Putative manganese efflux pump MntP from Pectobacterium carotovorum subsp. carotovorum (strain PC1).